The sequence spans 155 residues: Small ribosomal subunit protein uS17 (155 aa).

A2 carries the N-acetylalanine modification.

This sequence belongs to the universal ribosomal protein uS17 family.

The sequence is that of Small ribosomal subunit protein uS17 from Drosophila yakuba (Fruit fly).